Consider the following 340-residue polypeptide: MVGVLVNGYGSIGKRVADAVAKQDDMKVIGVTKTKPDFEARMAVTKGYKLFAAIPEKKHLFEEANIPIEGTIEDIIEDADIVVDGAPKKIGKANVENVYKKHNVKAIIQGGEKAKDAEDSFNSLWSYNRCYGKDYIRLVSCNTTGLCRTLYAIDSITDILKARVVLVRRAADPNDIKTGPINAIIPDPVTVPSHHGPDVVSVIPKLDGKIMTSAIIVPTTLMHMHSLMVETTGVTKDAVLDAIEKTPRIIKVKASEGIDSTAKIIEYSRDLGRLRYDLNEIAIWEESINVVDNEIYLMQAIHQESDVIPENIDCIRAMLEMEEDNIKSIEKTNRALGLLK.

Residues 11 to 12 and glycine 111 each bind NAD(+); that span reads SI. Residue 140–142 coordinates D-glyceraldehyde 3-phosphate; that stretch reads SCN. Catalysis depends on cysteine 141, which acts as the Nucleophile. Arginine 169 serves as a coordination point for NAD(+). 195–196 is a D-glyceraldehyde 3-phosphate binding site; sequence HG. Glutamine 303 is an NAD(+) binding site.

This sequence belongs to the glyceraldehyde-3-phosphate dehydrogenase family. As to quaternary structure, homotetramer.

It localises to the cytoplasm. The enzyme catalyses D-glyceraldehyde 3-phosphate + phosphate + NADP(+) = (2R)-3-phospho-glyceroyl phosphate + NADPH + H(+). The catalysed reaction is D-glyceraldehyde 3-phosphate + phosphate + NAD(+) = (2R)-3-phospho-glyceroyl phosphate + NADH + H(+). It participates in carbohydrate degradation; glycolysis; pyruvate from D-glyceraldehyde 3-phosphate: step 1/5. This chain is Glyceraldehyde-3-phosphate dehydrogenase, found in Methanococcus vannielii (strain ATCC 35089 / DSM 1224 / JCM 13029 / OCM 148 / SB).